An 844-amino-acid polypeptide reads, in one-letter code: Neuronal PAS domain-containing protein 4B (844 aa).

The segment at 61–74 is basic motif; degenerate; it reads KMYRSTKGASKARR. A bHLH domain is found at 61–114; it reads KMYRSTKGASKARRDQINAEIRSLKELLPISDADKARLSYLHIMSLACIYTRKS. The interval 75–114 is helix-loop-helix motif; the sequence is DQINAEIRSLKELLPISDADKARLSYLHIMSLACIYTRKS. PAS domains lie at 132-190 and 294-343; these read SLPE…PVDH and DMRI…LHNG. A compositionally biased stretch (polar residues) spans 410-422; that stretch reads SRQSSDPLSSPDQ. 4 disordered regions span residues 410-432, 444-479, 702-725, and 757-784; these read SRQS…SGLS, GRSS…GGGH, PLPN…SYSQ, and TEGG…EAPA. Over residues 704-716 the composition is skewed to pro residues; sequence PNLPSPSPVPPSP.

In terms of assembly, efficient DNA binding requires dimerization with another bHLH protein.

The protein resides in the nucleus. Functionally, transcription factor expressed in neurons of the brain that regulates the excitatory-inhibitory balance within neural circuits and is required for contextual memory in the hippocampus. Plays a key role in the structural and functional plasticity of neurons. Acts as an early-response transcription factor in both excitatory and inhibitory neurons, where it induces distinct but overlapping sets of late-response genes in these two types of neurons, allowing the synapses that form on inhibitory and excitatory neurons to be modified by neuronal activity in a manner specific to their function within a circuit, thereby facilitating appropriate circuit responses to sensory experience. This is Neuronal PAS domain-containing protein 4B (npas4b) from Danio rerio (Zebrafish).